The following is a 147-amino-acid chain: UPF0306 protein YhbP (147 aa).

It belongs to the UPF0306 family.

In Escherichia fergusonii (strain ATCC 35469 / DSM 13698 / CCUG 18766 / IAM 14443 / JCM 21226 / LMG 7866 / NBRC 102419 / NCTC 12128 / CDC 0568-73), this protein is UPF0306 protein YhbP.